The sequence spans 446 residues: MAKVYNQEVYVQFLKQHGFVFQSSEIYNGLNNSWDFGPLGAVLKQQIKQALYNFFIKNKADVLLVETPIILSELVWKASGHLANFVDTLVDCKSCKYRFRVDQINAEIKAKKDWNSFKVNCPNCHNQNWSEVRDFNLLFQTEIGVVNNDKRLVFLRPETAQGSFINFKNILQAKKRNLPFAIAQFGKSFRNEITPGNFLFRTREFEQFEIEWFCKPDDANSLFEKQLIMVEQFLQTVLKINPELLKKHEYDQSELAHYAKKTTDFLFNFPHGLKELWGLANRGDFDLKQHQEFSKKSMSFFDSELNQHFLPFIIEPAVGIERLFYALIVSSYRREIINEEEREVLSLPFDLCPEQIIVLPLVNKLKKEAFSVFETLAKTRWRVCFETTGSIGKRYRKADAIGIKYAVTFDFESLEDNAVTIRDRDTLVQQRIAIKELPQWFMKNGQ.

Substrate-binding residues include Arg100 and Glu158. Residues 190-192 (RNE), 200-205 (FRTREF), 275-276 (EL), and 319-322 (GIER) contribute to the ATP site. Residue 205-209 (FEQFE) participates in substrate binding. 315 to 319 (EPAVG) provides a ligand contact to substrate.

The protein belongs to the class-II aminoacyl-tRNA synthetase family. In terms of assembly, homodimer.

The protein resides in the cytoplasm. It carries out the reaction tRNA(Gly) + glycine + ATP = glycyl-tRNA(Gly) + AMP + diphosphate. Functionally, catalyzes the attachment of glycine to tRNA(Gly). This Mycoplasma genitalium (strain ATCC 33530 / DSM 19775 / NCTC 10195 / G37) (Mycoplasmoides genitalium) protein is Glycine--tRNA ligase.